Reading from the N-terminus, the 122-residue chain is Large ribosomal subunit protein uL18 (122 aa).

Belongs to the universal ribosomal protein uL18 family. As to quaternary structure, part of the 50S ribosomal subunit; part of the 5S rRNA/L5/L18/L25 subcomplex. Contacts the 5S and 23S rRNAs.

In terms of biological role, this is one of the proteins that bind and probably mediate the attachment of the 5S RNA into the large ribosomal subunit, where it forms part of the central protuberance. This chain is Large ribosomal subunit protein uL18, found in Buchnera aphidicola subsp. Acyrthosiphon pisum (strain 5A).